The sequence spans 350 residues: Lipoyl synthase, mitochondrial (350 aa).

Positions 83, 88, 94, 113, 117, 120, and 328 each coordinate [4Fe-4S] cluster. Residues 96-317 form the Radical SAM core domain; it reads GGESGTATAT…EKVGNELGFA (222 aa).

The protein belongs to the radical SAM superfamily. Lipoyl synthase family. [4Fe-4S] cluster serves as cofactor.

Its subcellular location is the mitochondrion. It catalyses the reaction [[Fe-S] cluster scaffold protein carrying a second [4Fe-4S](2+) cluster] + N(6)-octanoyl-L-lysyl-[protein] + 2 oxidized [2Fe-2S]-[ferredoxin] + 2 S-adenosyl-L-methionine + 4 H(+) = [[Fe-S] cluster scaffold protein] + N(6)-[(R)-dihydrolipoyl]-L-lysyl-[protein] + 4 Fe(3+) + 2 hydrogen sulfide + 2 5'-deoxyadenosine + 2 L-methionine + 2 reduced [2Fe-2S]-[ferredoxin]. It functions in the pathway protein modification; protein lipoylation via endogenous pathway; protein N(6)-(lipoyl)lysine from octanoyl-[acyl-carrier-protein]: step 2/2. In terms of biological role, catalyzes the radical-mediated insertion of two sulfur atoms into the C-6 and C-8 positions of the octanoyl moiety bound to the lipoyl domains of lipoate-dependent enzymes, thereby converting the octanoylated domains into lipoylated derivatives. This Trichoplax adhaerens (Trichoplax reptans) protein is Lipoyl synthase, mitochondrial.